Consider the following 167-residue polypeptide: Transmembrane protein 220 (167 aa).

Helical transmembrane passes span 10–30 (PGLW…AAVV), 40–60 (WVVV…NPLV), 69–89 (VSAI…YHFL), 104–122 (ELSG…HSSS), and 130–150 (MHLA…VYVH).

Its subcellular location is the membrane. This chain is Transmembrane protein 220 (Tmem220), found in Mus musculus (Mouse).